The following is a 57-amino-acid chain: Enolase (57 aa).

Glu25 serves as the catalytic Proton donor.

This sequence belongs to the enolase family. The cofactor is Mg(2+).

Its subcellular location is the cytoplasm. It localises to the secreted. The protein resides in the cell surface. It catalyses the reaction (2R)-2-phosphoglycerate = phosphoenolpyruvate + H2O. Its pathway is carbohydrate degradation; glycolysis; pyruvate from D-glyceraldehyde 3-phosphate: step 4/5. Its function is as follows. Catalyzes the reversible conversion of 2-phosphoglycerate (2-PG) into phosphoenolpyruvate (PEP). It is essential for the degradation of carbohydrates via glycolysis. This chain is Enolase, found in Clostridioides difficile (Peptoclostridium difficile).